A 189-amino-acid chain; its full sequence is Glycerol-3-phosphate acyltransferase (189 aa).

Helical transmembrane passes span 1-21 (MFWL…AILL), 51-71 (LAVL…LIAH), 77-97 (LQQQ…PLYF), 111-131 (MLLG…ALTF), and 151-171 (LLAW…LLIV).

It belongs to the PlsY family. Probably interacts with PlsX.

It is found in the cell inner membrane. The enzyme catalyses an acyl phosphate + sn-glycerol 3-phosphate = a 1-acyl-sn-glycero-3-phosphate + phosphate. It functions in the pathway lipid metabolism; phospholipid metabolism. Catalyzes the transfer of an acyl group from acyl-phosphate (acyl-PO(4)) to glycerol-3-phosphate (G3P) to form lysophosphatidic acid (LPA). This enzyme utilizes acyl-phosphate as fatty acyl donor, but not acyl-CoA or acyl-ACP. The sequence is that of Glycerol-3-phosphate acyltransferase from Pseudomonas fluorescens (strain ATCC BAA-477 / NRRL B-23932 / Pf-5).